A 254-amino-acid chain; its full sequence is Homeobox protein Dlx4b (254 aa).

The segment at residues 129 to 188 (IRKPRTIYSSVQLQALHQRFQQTQYLALPERADLAAKLGLTQTQVKIWFQNKRSKYKKIM) is a DNA-binding region (homeobox).

The protein belongs to the distal-less homeobox family.

The protein resides in the nucleus. During larvae development, may be important for neurocranium morphogenesis. In Danio rerio (Zebrafish), this protein is Homeobox protein Dlx4b (dlx4b).